The chain runs to 537 residues: Glucocorticoid-induced transcript 1 protein (537 aa).

Disordered stretches follow at residues M1 to A45 and L62 to H254. Phosphoserine is present on residues S69, S96, S98, and S99. Over residues S69–L86 the composition is skewed to low complexity. The span at P97–A106 shows a compositional bias: pro residues. Position 101 is a phosphothreonine (T101). Positions R121–S136 are enriched in basic and acidic residues. Residues I152–T168 are compositionally biased toward low complexity. Phosphoserine is present on residues S162 and S163. Residues T166 and T168 each carry the phosphothreonine modification. The span at R178 to A192 shows a compositional bias: basic and acidic residues. Residue S214 is modified to Phosphoserine. A coiled-coil region spans residues S217–K244. S248 carries the phosphoserine modification. Phosphothreonine is present on T256. S293 carries the post-translational modification Phosphoserine. The segment covering E309–R321 has biased composition (basic and acidic residues). The tract at residues E309–R407 is disordered. A compositionally biased stretch (polar residues) spans R329–R346. T333 carries the post-translational modification Phosphothreonine. S335 carries the post-translational modification Phosphoserine. At T340 the chain carries Phosphothreonine. Positions S347 to P359 are enriched in low complexity. Phosphoserine occurs at positions 384, 388, 396, 402, and 470. The interval S495 to L520 is disordered.

As to expression, predominantly expressed in thymus and testis, especially in CD4+CD8+ cells and at specific stages of spermatogenesis.

The sequence is that of Glucocorticoid-induced transcript 1 protein (Glcci1) from Mus musculus (Mouse).